The primary structure comprises 402 residues: Pyridinium-3,5-bisthiocarboxylic acid mononucleotide nickel insertion protein (402 aa).

Belongs to the LarC family.

It catalyses the reaction Ni(II)-pyridinium-3,5-bisthiocarboxylate mononucleotide = pyridinium-3,5-bisthiocarboxylate mononucleotide + Ni(2+). Functionally, involved in the biosynthesis of a nickel-pincer cofactor ((SCS)Ni(II) pincer complex). Binds Ni(2+), and functions in nickel delivery to pyridinium-3,5-bisthiocarboxylic acid mononucleotide (P2TMN), to form the mature cofactor. Is thus probably required for the activation of nickel-pincer cofactor-dependent enzymes. In Desulfitobacterium hafniense (strain DSM 10664 / DCB-2), this protein is Pyridinium-3,5-bisthiocarboxylic acid mononucleotide nickel insertion protein.